The chain runs to 131 residues: Large ribosomal subunit protein bL12 (131 aa).

The segment covering 100-125 (STPKPIKEGISKEDAEAAKKQLEDAG) has biased composition (basic and acidic residues). The segment at 100-131 (STPKPIKEGISKEDAEAAKKQLEDAGGKVSIK) is disordered.

It belongs to the bacterial ribosomal protein bL12 family. Homodimer. Part of the ribosomal stalk of the 50S ribosomal subunit. Forms a multimeric L10(L12)X complex, where L10 forms an elongated spine to which 2 to 4 L12 dimers bind in a sequential fashion. Binds GTP-bound translation factors.

Its function is as follows. Forms part of the ribosomal stalk which helps the ribosome interact with GTP-bound translation factors. Is thus essential for accurate translation. The chain is Large ribosomal subunit protein bL12 from Cyanothece sp. (strain PCC 7425 / ATCC 29141).